The primary structure comprises 95 residues: Cell division protein FtsB (95 aa).

Residues 1 to 3 (MKW) lie on the Cytoplasmic side of the membrane. Residues 4–21 (VTGLLVVLLLGLQYKLWI) form a helical membrane-spanning segment. Residues 22–95 (GEGSVAEVWQ…QVVGRPGETP (74 aa)) lie on the Periplasmic side of the membrane. A coiled-coil region spans residues 26 to 73 (VAEVWQLRQTLEAQRAENEELRYRNAALDAEVTDLKTGLDAIEERARR).

Belongs to the FtsB family. Part of a complex composed of FtsB, FtsL and FtsQ.

The protein resides in the cell inner membrane. Essential cell division protein. May link together the upstream cell division proteins, which are predominantly cytoplasmic, with the downstream cell division proteins, which are predominantly periplasmic. The sequence is that of Cell division protein FtsB from Thioalkalivibrio sulfidiphilus (strain HL-EbGR7).